Consider the following 134-residue polypeptide: Small ribosomal subunit protein uS8c (134 aa).

This sequence belongs to the universal ribosomal protein uS8 family. As to quaternary structure, part of the 30S ribosomal subunit.

The protein resides in the plastid. The protein localises to the chloroplast. Its function is as follows. One of the primary rRNA binding proteins, it binds directly to 16S rRNA central domain where it helps coordinate assembly of the platform of the 30S subunit. This is Small ribosomal subunit protein uS8c (rps8) from Nicotiana tabacum (Common tobacco).